Consider the following 412-residue polypeptide: Inositol polyphosphate-5-phosphatase A (412 aa).

Residue Cys409 is the site of S-farnesyl cysteine attachment. Residues 410–412 constitute a propeptide, removed in mature form; sequence VVQ.

This sequence belongs to the inositol 1,4,5-trisphosphate 5-phosphatase type I family. As to quaternary structure, interacts with TASOR. In terms of processing, isoprenylation at Cys-409 is required for localization at the membrane. Predominantly expressed in heart, brain, and skeletal muscle. In brain; high level in Purkinje cells.

Its subcellular location is the cell membrane. The protein localises to the cell projection. It is found in the dendrite. The catalysed reaction is 1D-myo-inositol 1,4,5-trisphosphate + H2O = 1D-myo-inositol 1,4-bisphosphate + phosphate. It carries out the reaction 1D-myo-inositol 1,3,4,5-tetrakisphosphate + H2O = 1D-myo-inositol 1,3,4-trisphosphate + phosphate. Functionally, phosphatase that specifically hydrolyzes the 5-phosphate of inositol 1,4,5-trisphosphate to inositol 1,4-bisphosphate, and inositol 1,3,4,5-tetrasphosphate to inositol 1,3,4-trisphosphate. Plays a crucial role in the survival of cerebellar Purkinje cells. This chain is Inositol polyphosphate-5-phosphatase A, found in Homo sapiens (Human).